The sequence spans 409 residues: Peptidase T (409 aa).

H78 lines the Zn(2+) pocket. Residue D80 is part of the active site. D140 lines the Zn(2+) pocket. E174 (proton acceptor) is an active-site residue. 3 residues coordinate Zn(2+): E175, D197, and H379.

It belongs to the peptidase M20B family. Zn(2+) serves as cofactor.

It localises to the cytoplasm. It catalyses the reaction Release of the N-terminal residue from a tripeptide.. Functionally, cleaves the N-terminal amino acid of tripeptides. The protein is Peptidase T of Photobacterium profundum (strain SS9).